The chain runs to 354 residues: Bifunctional transcriptional activator/DNA repair enzyme Ada (354 aa).

The segment at 1–171 (MKKATCLTDD…SSSYYRKADE (171 aa)) is methylphosphotriester-DNA--protein-cysteine methyltransferase. Thr-34 provides a ligand contact to DNA. Cys-38 acts as the Nucleophile; methyl group acceptor from methylphosphotriester in catalysis. Zn(2+) is bound by residues Cys-38 and Cys-42. 3 residues coordinate DNA: Arg-43, Arg-45, and Arg-67. Zn(2+)-binding residues include Cys-69 and Cys-72. An HTH araC/xylS-type domain is found at 85–183 (DKITHACRLL…GMTAKQFRHG (99 aa)). Residues 102–121 (LEALADQVAMSPFHLHRLFK) constitute a DNA-binding region (H-T-H motif). Positions 181–354 (RHGGENLAVR…LRREAENEER (174 aa)) are methylated-DNA--protein-cysteine methyltransferase. Catalysis depends on Cys-321, which acts as the Nucleophile; methyl group acceptor from either O6-methylguanine or O4-methylthymine.

This sequence in the C-terminal section; belongs to the MGMT family. Zn(2+) serves as cofactor.

It carries out the reaction (2'-deoxyribonucleoside 5'-methylphosphotriester)-DNA + L-cysteinyl-[protein] = 2'-deoxyribonucleotide-DNA + S-methyl-L-cysteinyl-[protein] + H(+). It catalyses the reaction a 6-O-methyl-2'-deoxyguanosine in DNA + L-cysteinyl-[protein] = S-methyl-L-cysteinyl-[protein] + a 2'-deoxyguanosine in DNA. The catalysed reaction is a 4-O-methyl-thymidine in DNA + L-cysteinyl-[protein] = a thymidine in DNA + S-methyl-L-cysteinyl-[protein]. In terms of biological role, involved in the adaptive response to alkylation damage in DNA caused by alkylating agents. Repairs O6-methylguanine (O6-MeG) and O4-methylthymine (O4-MeT) in DNA. Repairs the methylated nucleobase in DNA by stoichiometrically transferring the methyl group to a cysteine residue in the enzyme (Cys-321). Also specifically repairs the Sp diastereomer of DNA methylphosphotriester lesions by the same mechanism, although the methyl transfer occurs onto a different cysteine residue (Cys-38). Cannot demethylate the other diastereomer, Rp-methylphosphotriester. This is a suicide reaction: the enzyme is irreversibly inactivated. The methylation of Ada by methylphosphotriesters in DNA leads to its activation as a transcriptional regulator that activates the transcription of its own gene, ada, and other alkylation resistance genes, alkA, alkB and aidB. This is Bifunctional transcriptional activator/DNA repair enzyme Ada (ada) from Escherichia coli (strain K12).